We begin with the raw amino-acid sequence, 311 residues long: Methionyl-tRNA formyltransferase (311 aa).

(6S)-5,6,7,8-tetrahydrofolate is bound at residue 110–113 (SLLP).

Belongs to the Fmt family.

The catalysed reaction is L-methionyl-tRNA(fMet) + (6R)-10-formyltetrahydrofolate = N-formyl-L-methionyl-tRNA(fMet) + (6S)-5,6,7,8-tetrahydrofolate + H(+). Attaches a formyl group to the free amino group of methionyl-tRNA(fMet). The formyl group appears to play a dual role in the initiator identity of N-formylmethionyl-tRNA by promoting its recognition by IF2 and preventing the misappropriation of this tRNA by the elongation apparatus. This Acidobacterium capsulatum (strain ATCC 51196 / DSM 11244 / BCRC 80197 / JCM 7670 / NBRC 15755 / NCIMB 13165 / 161) protein is Methionyl-tRNA formyltransferase.